A 277-amino-acid polypeptide reads, in one-letter code: MDIALLIKAAIMGIVEGLTEFLPISSTGHLILAGALLGFDDDKAKVFDIAIQTGAIFAVILVYWQKIRSTLIALPNEKQAQQFALNVLVAFVPAVVLGLLFGKAIKAHLFTPVVVASAFIVGGFIILWAEKRQQRNPATIRIHDVESMSTMDALKVGLVQCLAMIPGTSRSGSTIIGGMLLGLSRKAATDFSFYLAIPTLIGAGAYSLFKDRALLSMADAPMFGVGLLFSFLSAWLCIRWLLRYIASHDFVPFAWYRIAFGIVVLATAWSGVVTWAE.

The next 7 membrane-spanning stretches (helical) occupy residues 3–23 (IALL…EFLP), 44–64 (AKVF…LVYW), 82–102 (QFAL…LLFG), 109–129 (LFTP…ILWA), 189–209 (TDFS…YSLF), 218–238 (ADAP…WLCI), and 253–273 (FAWY…SGVV).

Belongs to the UppP family.

The protein localises to the cell inner membrane. The enzyme catalyses di-trans,octa-cis-undecaprenyl diphosphate + H2O = di-trans,octa-cis-undecaprenyl phosphate + phosphate + H(+). Functionally, catalyzes the dephosphorylation of undecaprenyl diphosphate (UPP). Confers resistance to bacitracin. In Polaromonas naphthalenivorans (strain CJ2), this protein is Undecaprenyl-diphosphatase.